Consider the following 354-residue polypeptide: Uroporphyrinogen decarboxylase (354 aa).

Residues 28 to 32, Asp-78, Tyr-155, Ser-210, and His-325 contribute to the substrate site; that span reads RQAGR.

This sequence belongs to the uroporphyrinogen decarboxylase family. As to quaternary structure, homodimer.

The protein resides in the cytoplasm. It catalyses the reaction uroporphyrinogen III + 4 H(+) = coproporphyrinogen III + 4 CO2. It functions in the pathway porphyrin-containing compound metabolism; protoporphyrin-IX biosynthesis; coproporphyrinogen-III from 5-aminolevulinate: step 4/4. Its function is as follows. Catalyzes the decarboxylation of four acetate groups of uroporphyrinogen-III to yield coproporphyrinogen-III. This chain is Uroporphyrinogen decarboxylase, found in Crocosphaera subtropica (strain ATCC 51142 / BH68) (Cyanothece sp. (strain ATCC 51142)).